The primary structure comprises 183 residues: MSAPKATILTADEVRRAMTRIAHEIIERNKGAENLALIGIHTRGIPLAERLAAKLSELEGVDIPTGMLDITLYRDDLSEVAHQPIIRETQVPFDLGQRRVILVDDVLYTGRTVRAALDALIDLGRPVGIQLAVLVDRGHRELPIRADYVGKNLPTASSEVVKVKLHETDGVDSVELWDLEDLK.

The PRPP-binding motif lies at 100–112; that stretch reads VILVDDVLYTGRT.

It belongs to the purine/pyrimidine phosphoribosyltransferase family. PyrR subfamily.

The enzyme catalyses UMP + diphosphate = 5-phospho-alpha-D-ribose 1-diphosphate + uracil. Functionally, regulates the transcription of the pyrimidine nucleotide (pyr) operon in response to exogenous pyrimidines. Also displays a weak uracil phosphoribosyltransferase activity which is not physiologically significant. This is Bifunctional protein PyrR from Deinococcus deserti (strain DSM 17065 / CIP 109153 / LMG 22923 / VCD115).